Reading from the N-terminus, the 65-residue chain is Large ribosomal subunit protein bL31 (65 aa).

Zn(2+) is bound by residues C16, C18, C36, and C39.

It belongs to the bacterial ribosomal protein bL31 family. Type A subfamily. Part of the 50S ribosomal subunit. Zn(2+) is required as a cofactor.

Binds the 23S rRNA. The polypeptide is Large ribosomal subunit protein bL31 (Carboxydothermus hydrogenoformans (strain ATCC BAA-161 / DSM 6008 / Z-2901)).